Reading from the N-terminus, the 421-residue chain is MDEEQLRALLRDLDALKQRPDPAAIDRMRERVAGMVTPAAAARSKIKDMSSEVVDSNPYSRLMALQRMGIVDNYERIRDYSIAIVGIGGVGSVAAEMLTRCGIGRLLLYDYDTVELANMNRLFFRPDQVGMTKTDAAVQTLSGINPDVTLESYSLNITTVKGFETFLGSLKARSSDGRNTGVDLVLSCVDNYEARMVVNQACNELGQTWMESGVSEDAVSGHIQLLVPGETACFACAPPLVVASGVDERTLKREGVCAASLPTTMGVVAGLLVQNALKYLLKFGQVSPYLGYNSLKDYFPTMEMKPNPQCSNPACVQRQKEYMQSKPARDAAAKAKMEAEASAADECPVHLDNDWNISVVDDSDTVTPSILSTGADSLPEGLVRELPTADSYQEPVAPVTSGAIDDDLEELQRQLDALNSS.

ATP is bound by residues G89, D110, K133, N156, and N191. C233 and C236 together coordinate Zn(2+). Catalysis depends on C257, which acts as the Glycyl thioester intermediate. Positions 310 and 315 each coordinate Zn(2+).

The protein belongs to the ubiquitin-activating E1 family. UBA5 subfamily.

In terms of biological role, E1-like enzyme which activates UFM1. In Oryza sativa subsp. japonica (Rice), this protein is Ubiquitin-like modifier-activating enzyme 5.